We begin with the raw amino-acid sequence, 362 residues long: 3-dehydroquinate synthase (362 aa).

Residues 71–76 (DGEQYK), 105–109 (GVIGD), 129–130 (TT), Lys142, and Lys151 each bind NAD(+). Positions 184, 247, and 264 each coordinate Zn(2+).

The protein belongs to the sugar phosphate cyclases superfamily. Dehydroquinate synthase family. Requires NAD(+) as cofactor. The cofactor is Co(2+). Zn(2+) is required as a cofactor.

Its subcellular location is the cytoplasm. It carries out the reaction 7-phospho-2-dehydro-3-deoxy-D-arabino-heptonate = 3-dehydroquinate + phosphate. It functions in the pathway metabolic intermediate biosynthesis; chorismate biosynthesis; chorismate from D-erythrose 4-phosphate and phosphoenolpyruvate: step 2/7. Catalyzes the conversion of 3-deoxy-D-arabino-heptulosonate 7-phosphate (DAHP) to dehydroquinate (DHQ). The protein is 3-dehydroquinate synthase of Haemophilus ducreyi (strain 35000HP / ATCC 700724).